The following is a 288-amino-acid chain: Structure-specific endonuclease subunit SLX1 (288 aa).

A GIY-YIG domain is found at 10 to 93; it reads DFYCSYLLRS…QHSYKTRFIE (84 aa). The segment at 209 to 265 adopts an SLX1-type zinc-finger fold; that stretch reads CMICDKKIDYIHDEGTQMVGFCSDDECDFLSCLSCLYKEFTKNSKQIIPKSGHCPNC.

The protein belongs to the SLX1 family. In terms of assembly, forms a heterodimer with SLX4. A divalent metal cation is required as a cofactor.

The protein resides in the nucleus. Functionally, catalytic subunit of the SLX1-SLX4 structure-specific endonuclease that resolves DNA secondary structures generated during DNA repair and recombination. Has endonuclease activity towards branched DNA substrates, introducing single-strand cuts in duplex DNA close to junctions with ss-DNA. The chain is Structure-specific endonuclease subunit SLX1 from Kluyveromyces lactis (strain ATCC 8585 / CBS 2359 / DSM 70799 / NBRC 1267 / NRRL Y-1140 / WM37) (Yeast).